Consider the following 240-residue polypeptide: T4 protein (240 aa).

The protein belongs to the poxviruses B9 family.

In Sheeppox virus (strain KS-1) (SPPV), this protein is T4 protein.